A 99-amino-acid polypeptide reads, in one-letter code: DNA-directed RNA polymerase subunit omega (99 aa).

The protein belongs to the RNA polymerase subunit omega family. The RNAP catalytic core consists of 2 alpha, 1 beta, 1 beta' and 1 omega subunit. When a sigma factor is associated with the core the holoenzyme is formed, which can initiate transcription.

It catalyses the reaction RNA(n) + a ribonucleoside 5'-triphosphate = RNA(n+1) + diphosphate. Promotes RNA polymerase assembly. Latches the N- and C-terminal regions of the beta' subunit thereby facilitating its interaction with the beta and alpha subunits. The chain is DNA-directed RNA polymerase subunit omega from Deinococcus deserti (strain DSM 17065 / CIP 109153 / LMG 22923 / VCD115).